A 338-amino-acid chain; its full sequence is Aspartate--ammonia ligase (338 aa).

This sequence belongs to the class-II aminoacyl-tRNA synthetase family. AsnA subfamily.

The protein resides in the cytoplasm. It carries out the reaction L-aspartate + NH4(+) + ATP = L-asparagine + AMP + diphosphate + H(+). It functions in the pathway amino-acid biosynthesis; L-asparagine biosynthesis; L-asparagine from L-aspartate (ammonia route): step 1/1. In Lactobacillus delbrueckii subsp. bulgaricus (strain ATCC 11842 / DSM 20081 / BCRC 10696 / JCM 1002 / NBRC 13953 / NCIMB 11778 / NCTC 12712 / WDCM 00102 / Lb 14), this protein is Aspartate--ammonia ligase.